Consider the following 229-residue polypeptide: Small ribosomal subunit protein uS3 (229 aa).

A KH type-2 domain is found at 39–107; sequence VRQYLTEKLK…TAQINIAEIR (69 aa).

Belongs to the universal ribosomal protein uS3 family. In terms of assembly, part of the 30S ribosomal subunit. Forms a tight complex with proteins S10 and S14.

Its function is as follows. Binds the lower part of the 30S subunit head. Binds mRNA in the 70S ribosome, positioning it for translation. This Shewanella denitrificans (strain OS217 / ATCC BAA-1090 / DSM 15013) protein is Small ribosomal subunit protein uS3.